The primary structure comprises 356 residues: Fructose-1,6-bisphosphatase class 1 (356 aa).

The segment at 1–26 is disordered; it reads MAREWPMTHPSNHPMDHHHQTLQAHL. The Mg(2+) site is built by Glu101, Asp120, Leu122, and Asp123. Substrate-binding positions include 123-126 and Asn211; that span reads DGSS. Residue Glu283 coordinates Mg(2+).

Belongs to the FBPase class 1 family. Homotetramer. It depends on Mg(2+) as a cofactor.

The protein localises to the cytoplasm. The catalysed reaction is beta-D-fructose 1,6-bisphosphate + H2O = beta-D-fructose 6-phosphate + phosphate. The protein operates within carbohydrate biosynthesis; Calvin cycle. The protein is Fructose-1,6-bisphosphatase class 1 of Bradyrhizobium sp. (strain ORS 278).